Here is a 251-residue protein sequence, read N- to C-terminus: MRTPLIAGNWKLFKTLADATALIDELVPLVSDVKDVEIVVAPVFTAINTVAKAAGKTGVKVAAQDCYWEDEGAFTGEVSPKLLKDAGCSHVIIGHSERRQYFGETDGTVNLKTKAAIRAGLTVLLCVGESLAQRESNDTFKVIETQVRGGLADIPAAELTQIVVAYEPVWAIGTGKTASDAQAQEVHAFIRTLVAQIYGPSEADAMRILYGGSVKPENIKGLMSQPDIDGALVGGASLKAESFAGIVRFKG.

9-11 (NWK) is a substrate binding site. His-95 functions as the Electrophile in the catalytic mechanism. Residue Glu-167 is the Proton acceptor of the active site. Residues Gly-173, Ser-213, and 234 to 235 (GG) each bind substrate.

Belongs to the triosephosphate isomerase family. In terms of assembly, homodimer.

The protein localises to the cytoplasm. The catalysed reaction is D-glyceraldehyde 3-phosphate = dihydroxyacetone phosphate. It participates in carbohydrate biosynthesis; gluconeogenesis. The protein operates within carbohydrate degradation; glycolysis; D-glyceraldehyde 3-phosphate from glycerone phosphate: step 1/1. Its function is as follows. Involved in the gluconeogenesis. Catalyzes stereospecifically the conversion of dihydroxyacetone phosphate (DHAP) to D-glyceraldehyde-3-phosphate (G3P). This Trichlorobacter lovleyi (strain ATCC BAA-1151 / DSM 17278 / SZ) (Geobacter lovleyi) protein is Triosephosphate isomerase.